A 210-amino-acid chain; its full sequence is tRNA (guanine-N(7)-)-methyltransferase (210 aa).

Residues glutamate 36, glutamate 61, aspartate 90, and aspartate 112 each contribute to the S-adenosyl-L-methionine site. Residue aspartate 112 is part of the active site. Residues lysine 116, aspartate 148, and 188–191 (TEYE) each bind substrate.

The protein belongs to the class I-like SAM-binding methyltransferase superfamily. TrmB family.

The catalysed reaction is guanosine(46) in tRNA + S-adenosyl-L-methionine = N(7)-methylguanosine(46) in tRNA + S-adenosyl-L-homocysteine. It functions in the pathway tRNA modification; N(7)-methylguanine-tRNA biosynthesis. Functionally, catalyzes the formation of N(7)-methylguanine at position 46 (m7G46) in tRNA. In Mycoplasma pneumoniae (strain ATCC 29342 / M129 / Subtype 1) (Mycoplasmoides pneumoniae), this protein is tRNA (guanine-N(7)-)-methyltransferase.